The primary structure comprises 215 residues: Orotate phosphoribosyltransferase (215 aa).

Residue Lys-26 participates in 5-phospho-alpha-D-ribose 1-diphosphate binding. 34–35 (FF) lines the orotate pocket. 5-phospho-alpha-D-ribose 1-diphosphate is bound by residues 72-73 (YK), Arg-99, Lys-100, Lys-103, His-105, and 124-132 (DDVITAGTA). Orotate is bound by residues Thr-128 and Arg-156.

The protein belongs to the purine/pyrimidine phosphoribosyltransferase family. PyrE subfamily. As to quaternary structure, homodimer. Requires Mg(2+) as cofactor.

It carries out the reaction orotidine 5'-phosphate + diphosphate = orotate + 5-phospho-alpha-D-ribose 1-diphosphate. It functions in the pathway pyrimidine metabolism; UMP biosynthesis via de novo pathway; UMP from orotate: step 1/2. Catalyzes the transfer of a ribosyl phosphate group from 5-phosphoribose 1-diphosphate to orotate, leading to the formation of orotidine monophosphate (OMP). This chain is Orotate phosphoribosyltransferase, found in Hahella chejuensis (strain KCTC 2396).